The primary structure comprises 81 residues: Putative snRNP Sm-like protein (81 aa).

In terms of domain architecture, Sm spans 13–81 (RPLDALGNSL…RGDNIVYISP (69 aa)).

It belongs to the snRNP Sm proteins family.

This Methanothermobacter thermautotrophicus (strain ATCC 29096 / DSM 1053 / JCM 10044 / NBRC 100330 / Delta H) (Methanobacterium thermoautotrophicum) protein is Putative snRNP Sm-like protein.